We begin with the raw amino-acid sequence, 238 residues long: Laccase-S (238 aa).

2 consecutive Plastocyanin-like domains span residues 4 to 87 (NVIA…YDPA) and 100 to 238 (HTII…IARY). N-linked (GlcNAc...) asparagine glycosylation is present at N8. Positions 21, 23, 66, and 68 each coordinate Cu cation. A disulfide bridge links C74 with C162. Residue N165 is glycosylated (N-linked (GlcNAc...) asparagine).

The protein belongs to the multicopper oxidase family. In terms of assembly, monomer. Cu cation is required as a cofactor.

The protein resides in the secreted. It carries out the reaction 4 hydroquinone + O2 = 4 benzosemiquinone + 2 H2O. Its activity is regulated as follows. Activity is strongly promoted by toluene. Activity is promoted by magnesium, potassium, cadmium, zinc, nickel, sodium, lead and manganese ions. Completely inhibited by IAA (cysteine protease inhibitor), PMSF (serine protease inhibitor), DEP (histidine protease inhibitor) and NAI (tyrosine protease inhibitor). Inhibited by ethanol, acetone, SDS, and EDTA. Activity is strongly inhibited by mercury ions. Also inhibited by lithium, aluminum, calcium, barium and iron ions. In terms of biological role, lignin degradation and detoxification of lignin-derived products. Has activity towards 2,2'-azino-bis(3-ethylbenzothiazoline-6-sulfonic acid) (ABTS). In Trametes hirsuta (White-rot fungus), this protein is Laccase-S.